The primary structure comprises 18562 residues: Titin homolog (18562 aa).

In terms of domain architecture, Ig-like 1 spans 90–176 (PKFIQVIKAY…GVSTSYGYIT (87 aa)). The segment at 384–404 (RFHPQPPKPPRAGTSRRFLPE) is disordered. Ig-like domains lie at 406-493 (PKFV…TQVT), 821-913 (PKIV…AFIN), 943-1038 (PKFI…LTIS), and 1135-1225 (PRFE…LTVD). Cysteine 842 and cysteine 897 are joined by a disulfide. The tract at residues 1336–1360 (LPPVQKSMSVQEEKASSQRTPSPMN) is disordered. An Ig-like 6 domain is found at 1679–1762 (PKFLRKLVNC…ASNVAGTTFS (84 aa)). The cysteines at positions 1700 and 1751 are disulfide-linked. 3 coiled-coil regions span residues 1766–1786 (LKLS…SEIK), 2011–2038 (QSLD…ERTS), and 2065–2085 (ISDQ…ALQE). The disordered stretch occupies residues 2155 to 2177 (RKGSDKDKRKATRIKRVPSAHSA). The segment covering 2163–2172 (RKATRIKRVP) has biased composition (basic residues). Residues 2205–2231 (LKQNEEAKEIQELFVKIEKEINTIAEL) adopt a coiled-coil conformation. 2 disordered regions span residues 2298-2459 (IIGI…TADA) and 2614-2637 (KSSL…EVTA). Low complexity predominate over residues 2309-2323 (RRPSSTPRGSTRSSN). The span at 2324 to 2341 (LTTSQDSQATTKMTVSSE) shows a compositional bias: polar residues. Residues 2606–2630 (LMQTLASEKSSLKAAEEDEKEGEEE) adopt a coiled-coil conformation. Over residues 2621-2636 (EEDEKEGEEEGEEEVT) the composition is skewed to acidic residues. Ig-like domains lie at 3095 to 3177 (KEVM…SGLY) and 3179 to 3264 (TERS…SFVS). The interval 3362–3692 (EVPKVAEPSE…NAEAQKVVDS (331 aa)) is disordered. Residues 3655 to 3665 (SEEETPLEETN) show a composition bias toward acidic residues. 3 consecutive Ig-like domains span residues 3789–3878 (PVFT…CEIV), 3897–3985 (PHFV…CTID), and 4038–4125 (PPYF…CVLT). 2 disulfides stabilise this stretch: cysteine 3919/cysteine 3969 and cysteine 4059/cysteine 4109. Disordered stretches follow at residues 4553–4599 (QSRE…SAPT), 4634–4699 (TVEP…EIVE), 4750–4814 (GSTA…TSEV), 4826–4855 (PVPE…EVQP), 4912–4931 (STAA…VESK), 4950–4969 (PETS…PVES), 4989–5216 (PETS…EILE), 5267–5294 (GSTA…EVEP), 5306–5325 (PETS…SVES), 5345–5372 (PETS…EVEP), 5428–6101 (GSTA…VEPT), 6127–6157 (VQVP…EVQP), 6214–6900 (STAA…ETSE), and 6930–8453 (APVE…DDKL). Over residues 4555 to 4577 (RELDNTERNFTVNKEKDESKKPS) the composition is skewed to basic and acidic residues. PVET repeat units follow at residues 4599–4626 (TVEK…KDVP), 4627–4665 (VPET…KDVP), 4666–4704 (VPET…KDVT), 4755–4787 (PAQE…KDVP), 4788–4826 (VPET…KDVP), 4827–4865 (VPET…KDVT), 4917–4948 (AQEP…KDVP), 4949–4987 (VPET…KDVP), 4988–5026 (VPET…KDVP), 5027–5065 (VPET…KDVP), 5066–5104 (VPET…KDVP), 5105–5143 (VPET…KDVP), 5144–5182 (VPET…KVVP), 5183–5221 (VPET…KDVT), 5273–5304 (AQEP…KDVP), 5305–5343 (VPET…KDVP), 5344–5382 (VPET…KDVT), 5434–5465 (AQEP…KDVP), 5466–5504 (VPET…KDVP), 5505–5543 (VPET…KVVP), 5544–5582 (VPET…KDVP), 5583–5621 (VPET…KDVP), 5622–5660 (VPET…KDVS), 5661–5699 (VPET…KDVS), 5700–5738 (VPET…KDVP), 5739–5777 (VPET…KDVQ), 5778–5816 (VPET…KDVP), 5817–5855 (VPET…KDVP), 5856–5894 (VPET…KDVS), 5895–5933 (VPET…KDVP), 5934–5972 (VPET…KDVQ), 5973–6011 (VPET…KDVP), 6012–6050 (VPET…KDVQ), 6051–6089 (VPET…KDVS), 6090–6128 (VPET…KDVQ), 6129–6167 (VPET…KDVT), 6219–6250 (AHEP…KDVP), 6251–6289 (VPET…KDLP), 6290–6328 (VPET…KDVP), 6329–6367 (VPET…KDVP), 6368–6406 (VPET…KDVP), 6407–6445 (VPET…KDVS), 6446–6484 (VPET…KDVS), 6485–6523 (VPET…KDVP), 6524–6562 (VPET…KDVQ), 6563–6601 (VPET…KDVP), 6602–6640 (VPET…KDVP), 6641–6679 (VPET…KDVQ), 6680–6718 (VPET…KDVP), 6719–6757 (VPET…KDVA), 6758–6796 (VPET…KDVP), 6797–6835 (VPET…KDVP), 6836–6874 (VPET…KDVP), 6875–6913 (VPET…KDVP), 6914–6952 (VPEA…KDVP), and 6953–6991 (VPEA…KLKK). 2 stretches are compositionally biased toward basic and acidic residues: residues 4638 to 4651 (TVEK…KETS) and 4677 to 4691 (TVEK…EKSE). A compositionally biased stretch (basic and acidic residues) spans 4960-4969 (TVEKLKPVES). Residues 5038-5051 (TVEKLKPVESKETS) show a composition bias toward basic and acidic residues. 2 stretches are compositionally biased toward basic and acidic residues: residues 5116–5129 (TVEK…KETS) and 5155–5168 (TVEK…KETS). The stretch at 5212 to 5235 (AEILEQKDVTCEEEIKELLTEVEV) forms a coiled coil. Residues 5316–5325 (TVEKLKSVES) are compositionally biased toward basic and acidic residues. Basic and acidic residues-rich tracts occupy residues 5477–5490 (TVEK…KETS) and 5516–5529 (TVEK…KETS). Composition is skewed to basic and acidic residues over residues 6690–6704 (PTKE…KETS), 6729–6743 (PTKE…KETS), 6768–6782 (PTKE…KETS), 6807–6821 (PTKE…KETS), 6846–6860 (PTKE…KETS), and 6885–6899 (PTKE…KETS). Composition is skewed to basic and acidic residues over residues 6972–7606 (ESKE…DNFK), 7613–7630 (LQKE…DNFK), 7637–8062 (LQKE…DNFK), and 8069–8453 (LQKE…DDKL). A coiled-coil region spans residues 6984 to 7812 (QADAKLKKEK…DKLKQETDAK (829 aa)). BLUE repeat units lie at residues 6992 to 6996 (EKDDK), 6997 to 7012 (HKQE…NDDK), 7013 to 7028 (LKQE…NDDK), 7029 to 7044 (LKQE…NDDK), 7045 to 7060 (LKQE…NDDK), 7061 to 7076 (LKQE…NDDK), 7077 to 7092 (LKQE…NDDK), 7093 to 7108 (LKQE…NDDK), 7109 to 7124 (LKQE…NDDK), 7125 to 7140 (LKQE…NDDK), 7141 to 7156 (LKQE…NDDK), 7157 to 7172 (LKQE…NDDK), 7173 to 7188 (LKQE…NDDK), 7189 to 7204 (LKQE…KHDK), 7205 to 7220 (LKQE…NDDK), 7221 to 7236 (LKQE…NDDK), 7237 to 7252 (LKQE…KDDK), 7253 to 7268 (LKQE…KDDK), 7269 to 7284 (LKQD…KDDK), 7285 to 7300 (LKQE…KDDK), 7301 to 7316 (LKHE…KDDK), 7317 to 7332 (LKQE…KDDR), 7333 to 7348 (LKKD…KDDK), 7349 to 7364 (LKQE…KDDK), 7365 to 7380 (LKHE…KDDK), 7381 to 7396 (LKQE…KDDK), 7397 to 7412 (LKQE…KDDK), 7413 to 7428 (LKQE…KDDK), 7429 to 7444 (LKQE…KDDK), 7445 to 7460 (LKQE…KDDK), 7461 to 7476 (LKQE…KDDK), 7477 to 7492 (LKQE…KDDK), 7493 to 7508 (LKQE…KDDK), 7509 to 7524 (LKQD…KDDK), 7525 to 7540 (LKQE…KDDK), 7541 to 7556 (LKHE…KDDK), 7557 to 7572 (LKQE…KDDK), 7573 to 7588 (LKQD…KDDK), 7589 to 7604 (LKHE…KDDN), 7605 to 7620 (FKQE…KDDK), 7621 to 7628 (LKQEKDDN), 7629 to 7644 (FKQE…KDDK), 7645 to 7652 (LKQEKDDK), 7653 to 7668 (LKQE…KDDK), 7669 to 7684 (LKQE…KDDK), 7685 to 7700 (LKQE…KDDK), 7701 to 7716 (LKQE…KDDK), 7717 to 7732 (LKQE…KDDK), 7733 to 7748 (LKQE…KDDK), 7749 to 7764 (LKQE…KDDK), 7765 to 7772 (LKQEKNDK), 7773 to 7788 (LKQE…KDDK), 7789 to 7804 (LKQE…KDDK), 7805 to 7820 (LKQE…KDDK), 7821 to 7836 (LKQE…KDDK), 7837 to 7852 (LKQE…KDDK), 7853 to 7868 (LKQE…KDNK), 7869 to 7884 (LKQE…KDNK), 7885 to 7900 (LKQE…KDDK), 7901 to 7916 (LKQE…KDDK), 7917 to 7932 (LKQE…KDDK), 7933 to 7948 (LKQE…KDDK), 7949 to 7964 (LKQE…KDDK), 7965 to 7980 (LKQE…KDDK), 7981 to 7996 (LKQE…KDDK), 7997 to 8012 (LKQE…KDDK), 8013 to 8028 (LKQE…KDDK), 8029 to 8044 (LKQE…KDDK), 8045 to 8060 (LKQE…KDDN), 8061 to 8076 (FKQE…KDDK), 8077 to 8084 (LKQEKDDK), 8085 to 8100 (LKQE…KDDK), 8101 to 8116 (LKQE…KDDK), 8117 to 8132 (LKQE…KDDK), 8133 to 8148 (LKQE…KDDK), 8149 to 8164 (LKQE…KDDK), 8165 to 8180 (LKQE…KDDK), 8181 to 8196 (LKQE…KDDK), 8197 to 8212 (LKQE…KDDK), 8213 to 8228 (LKQE…KDDK), 8229 to 8244 (LKQE…KDDK), 8245 to 8260 (LKQE…KDDK), 8261 to 8276 (LKQE…KDDK), 8277 to 8292 (LKQE…KDDK), 8293 to 8308 (LKQE…KDNK), 8309 to 8324 (LKQE…KDNK), 8325 to 8340 (LKQE…KDDK), 8341 to 8356 (LKQE…KDDK), 8357 to 8371 (LKQE…EKDD), 8373 to 8388 (LKQE…KDDK), 8389 to 8404 (LKQE…KDDK), 8405 to 8420 (LKQE…KDDK), 8421 to 8436 (LKQE…KDDK), 8437 to 8452 (LKQE…KDDK), 8453 to 8468 (LKQE…KDDK), and 8469 to 8484 (LKQE…KGDK). The stretch at 7876 to 8273 (KLKKEKDNKL…EADAKLKKDK (398 aa)) forms a coiled coil. Residues 8316–8490 (KLKKEKDNKL…KGDKLKLEDQ (175 aa)) are a coiled coil. Residues 8599–8611 (KHLKKKKKHHKKE) are compositionally biased toward basic residues. Positions 8599-8626 (KHLKKKKKHHKKEKIAVKETEQDEKTVS) are disordered. A compositionally biased stretch (basic and acidic residues) spans 8612 to 8626 (KIAVKETEQDEKTVS). Residues 8950 to 9041 (KPRKAQLVAL…EIIEVNTLDY (92 aa)) form the Fibronectin type-III 1 domain. 20 disordered regions span residues 9079 to 9104 (IEEH…LDSE), 9147 to 9436 (VQKI…AAAE), 9481 to 9609 (EEQS…ETES), 9702 to 10224 (ADAV…ESRI), 10239 to 10274 (ESDD…EDSP), 10539 to 11018 (QSAP…DSFT), 11030 to 11111 (EDAV…QKDQ), 11123 to 11213 (KKLA…QDKT), 11225 to 11387 (AKTT…SLTS), 11420 to 11592 (KGLN…NPEL), 11624 to 11825 (LTKK…SDNL), 11872 to 11955 (LSAH…TSLS), 11996 to 12054 (TNLI…LQKN), 12397 to 12418 (GRRV…RKKR), 12537 to 12974 (EESR…PAES), 13026 to 13045 (EAAK…TEVV), 13065 to 13261 (AAEA…LNDK), 13283 to 13514 (QAQA…EQLK), 13553 to 13574 (EEKQ…KLKL), and 13594 to 13874 (EKLA…RRTG). Over residues 9084-9093 (KLKKKSKKSK) the composition is skewed to basic residues. Basic and acidic residues-rich tracts occupy residues 9172–9184 (VKKD…KKSL) and 9191–9202 (TKKEIQGKPEKK). Over residues 9213 to 9231 (SSISETSETLTKDLTQTKQ) the composition is skewed to polar residues. The segment covering 9232–9267 (SEPEPAKRTTETSVQDEVKRKTETTSKSKQTTEEHP) has biased composition (basic and acidic residues). Positions 9273–9283 (SDSSISSTSDA) are enriched in low complexity. A compositionally biased stretch (basic and acidic residues) spans 9295–9332 (EAQKVTEKPETAKLESKSKMTEDTTKESDNKETVDEKP). The segment covering 9346-9359 (STISETSETSAVES) has biased composition (low complexity). The stretch at 9371-9510 (AAVDKEKKQK…QTKAKAAEKQ (140 aa)) forms a coiled coil. 2 stretches are compositionally biased toward basic and acidic residues: residues 9373–9436 (VDKE…AAAE) and 9481–9521 (EEQS…KSNK). Low complexity predominate over residues 9547-9558 (SSISQKSDTSKT). Residues 9577–9749 (TSKQKETDKK…QTVEEQAKLD (173 aa)) are a coiled coil. Composition is skewed to basic and acidic residues over residues 9578 to 9609 (SKQK…ETES) and 9702 to 9783 (ADAV…DEKP). Residues 9798–9809 (SISQKSVTSKTV) show a composition bias toward polar residues. 3 stretches are compositionally biased toward basic and acidic residues: residues 9819-10004 (ETQK…DEKP), 10040-10149 (ETQK…KSEN), and 10162-10196 (VKSE…EPKE). 2 coiled-coil regions span residues 9822–9995 (KVAD…TEEA) and 10046–10129 (EADK…TSKK). Residues 10197 to 10206 (KKKIIKKKKD) are compositionally biased toward basic residues. Residues 10207 to 10224 (TTKPQEASKELSSDESRI) show a composition bias toward basic and acidic residues. The segment covering 10239–10250 (ESDDLSTASTIK) has biased composition (polar residues). Residues 10461 to 10553 (KPTSLQVTST…DTIEATTQAE (93 aa)) enclose the Fibronectin type-III 2 domain. The span at 10566 to 10609 (EKVKEPVSKKPENTKESEGHKKRDRKESEDHDENNLGKSGKDEF) shows a compositional bias: basic and acidic residues. Residues 10612 to 10637 (SGESGTSNQNEESAQLNTSFTSTEQH) are compositionally biased toward polar residues. Residues 10663–10680 (IDADVVEVEYDEQGDDIP) are compositionally biased toward acidic residues. A compositionally biased stretch (basic and acidic residues) spans 10707 to 10716 (MAEKDSDAME). Polar residues predominate over residues 10779–10790 (ADQTGMSIQDLN). Composition is skewed to basic and acidic residues over residues 10840 to 10852 (QLDK…DDKM) and 10863 to 10884 (KKPE…KESD). The segment covering 10961-10975 (LSTSEQVENASQNLG) has biased composition (polar residues). 3 stretches are compositionally biased toward basic and acidic residues: residues 10999 to 11009 (IHGEAESKLGE), 11045 to 11055 (SAEKTSLEVRD), and 11076 to 11089 (SNRD…RDLN). Residues 11018 to 11064 (TLQDLYEELKAKEDAVEAGAETSNADQSAEKTSLEVRDMKKKMKKKQ) adopt a coiled-coil conformation. Positions 11090–11108 (TQHSNQTGEDESSTFNFGQ) are enriched in polar residues. Positions 11159–11173 (KKGEENEKTKFEAKH) are enriched in basic and acidic residues. A compositionally biased stretch (low complexity) spans 11174–11187 (LGSSSASDSLAEST). Basic and acidic residues-rich tracts occupy residues 11195–11211 (KGEV…KNQD), 11271–11280 (IPDKNRDSDK), and 11295–11318 (ESAE…EKTL). Residues 11374–11387 (SKVTTSFADESLTS) show a composition bias toward polar residues. Composition is skewed to basic and acidic residues over residues 11440-11464 (KVKD…KDQK) and 11472-11485 (GSKD…EEKT). Residues 11503-11515 (MTDQKNVQESQYA) show a composition bias toward polar residues. Basic and acidic residues-rich tracts occupy residues 11624-11635 (LTKKQDENDAKK), 11645-11669 (AKKD…DSRE), and 11722-11735 (VSEK…EKTV). A compositionally biased stretch (polar residues) spans 11754–11767 (ESLNASSALSTTDV). Residues 11916–11937 (AEDKYVESRKKTTLKKKPEQKQ) show a composition bias toward basic and acidic residues. The stretch at 12408 to 12428 (ELDDAKKRKKRRIKRVVERRN) forms a coiled coil. One can recognise an Ig-like 12 domain in the interval 12432-12547 (PRLTQLIPPR…ESRDDDKSVD (116 aa)). 3 stretches are compositionally biased toward basic and acidic residues: residues 12537–12547 (EESRDDDKSVD), 12555–12567 (LEEK…DKSK), and 12609–12689 (VGAK…KKDA). Residues 12690-12701 (SQPSSSKESSPP) are compositionally biased toward low complexity. Residues 12729–12740 (TMHSETNITTTI) are compositionally biased toward polar residues. Basic and acidic residues-rich tracts occupy residues 12766–12839 (ESAK…KNKS), 12852–12865 (ETKK…EVPK), and 12889–12940 (PADD…DDKS). Positions 12797-12828 (KKSEKKDEVTAEKQSTEALIESKKKEVDESKI) form a coiled coil. The stretch at 12980–13103 (AEVNKAKKQK…LKLEEESAAK (124 aa)) forms a coiled coil. Basic and acidic residues-rich tracts occupy residues 13065-13124 (AAEA…KAGE), 13133-13145 (PTSK…KDVG), 13176-13191 (TDSE…DEPT), 13203-13261 (EADK…LNDK), 13283-13327 (QAQA…EKQA), 13337-13354 (AVKK…EANK), and 13361-13416 (LKIE…DEKP). Positions 13237–13380 (LDAQEKIKKV…SKQTVEEQAK (144 aa)) form a coiled coil. The span at 13431–13442 (SISQKSETSKTV) shows a compositional bias: polar residues. A compositionally biased stretch (basic and acidic residues) spans 13452-13514 (ETQKVADAAR…KQKEKDEQLK (63 aa)). Residues 13455 to 13628 (KVADAARKQK…ETKSKQTEEA (174 aa)) adopt a coiled-coil conformation. Residues 13594–13637 (EKLAQEQSRLEDEAKKSAEKQKLESETKSKQTEEAPKESVDEKP) show a composition bias toward basic and acidic residues. A compositionally biased stretch (low complexity) spans 13651-13662 (SSISQKSKSAKS). Residues 13684–13696 (KVEQSPDESTSAT) are compositionally biased toward polar residues. Over residues 13697 to 13735 (IKRDPAQKTEEISKQDDGDEKKTTTDGKPPKPEDSEATP) the composition is skewed to basic and acidic residues. The span at 13747–13760 (SDSVASDASLADVS) shows a compositional bias: low complexity. Basic and acidic residues predominate over residues 13761–13770 (KLSDDVEEKP). The span at 13784-13793 (SVISETSSVD) shows a compositional bias: polar residues. Basic and acidic residues-rich tracts occupy residues 13795-13808 (IKPE…EKAE) and 13824-13843 (SEPK…DMMT). Residues 13963–14036 (PVDFVKYLPR…RAKYEDSGKY (74 aa)) form the Ig-like 13 domain. 3 Fibronectin type-III domains span residues 14153–14247 (APGD…TGSP), 14253–14348 (VEFP…TVEG), and 14350–14448 (VPEI…VLAD). Ig-like domains follow at residues 14451–14542 (PRVL…VGIS), 14550–14634 (SSFS…VIVN), and 14638–14727 (PHIL…LVFE). The cysteines at positions 14568 and 14618 are disulfide-linked. 2 consecutive Fibronectin type-III domains span residues 14826-14920 (APCD…TLES) and 14937-15027 (ILRT…LVPG). A disordered region spans residues 15011–15180 (VSSPSEETNP…TGKETTEKKK (170 aa)). Composition is skewed to basic and acidic residues over residues 15034-15060 (KTEK…EKQV) and 15085-15117 (KVAE…ESRR). Over residues 15118-15132 (GSLQASSDNESVTTT) the composition is skewed to polar residues. The segment covering 15133-15177 (SEKRSEAELEKNSEKSAEKKSTSADLEAADKAETEKSETGKETTE) has biased composition (basic and acidic residues). Ig-like domains lie at 15180 to 15274 (KKVV…VSIA) and 15283 to 15371 (PKVE…IALR). Fibronectin type-III domains are found at residues 15383–15475 (PTGP…LKKK) and 15503–15596 (QIGK…TTES). A disordered region spans residues 15470–15503 (TTLKKKEETGKQKSEKSESDEKKSESDKVSELKQ). Residues 15473–15503 (KKKEETGKQKSEKSESDEKKSESDKVSELKQ) are compositionally biased toward basic and acidic residues. 2 Ig-like domains span residues 15599 to 15687 (PAFT…CKLT) and 15692 to 15786 (PEIN…IQVT). Residues 15791–15883 (APGKPAVEDQ…DESELVVVKN (93 aa)) form the Fibronectin type-III 10 domain. A Protein kinase domain is found at 15934-16189 (YIIHEELGKG…VQDALRHPWI (256 aa)). ATP-binding positions include 15940–15948 (LGKGAYGTV) and lysine 15963. Catalysis depends on aspartate 16055, which acts as the Proton acceptor. The segment at 16206-16264 (KMQPKLDKSGVPARQKRNFLSLKRWSDDLLPIGRLAKRGAIFRRLTMDGVFERNIAFDT) is autoinhibitory domain. Ig-like domains follow at residues 16268 to 16358 (PSVK…AKLS), 16500 to 16575 (GKQL…VAKN), 16605 to 16692 (PRFR…FSVV), and 16705 to 16789 (PKFL…KDFT). 4 disulfides stabilise this stretch: cysteine 16290–cysteine 16342, cysteine 16508–cysteine 16571, cysteine 16627–cysteine 16677, and cysteine 16726–cysteine 16778. Residues 16805 to 16827 (LTPVRSRSRSRSRSPSVVGGEIQ) are disordered. Ig-like domains follow at residues 16829–16918 (PPVV…AIVV), 16932–17025 (PTFV…LTIS), and 17037–17126 (PYFI…TEVS). A disordered region spans residues 17121–17169 (QNTEVSVTKSKEVKEKKEKKKVEKKDEGKKKPGRPGLPRPSGASKTEQV). The span at 17129–17150 (KSKEVKEKKEKKKVEKKDEGKK) shows a compositional bias: basic and acidic residues. A Fibronectin type-III 11 domain is found at 17154-17245 (RPGLPRPSGA…MTSTLKTASV (92 aa)). Ig-like domains are found at residues 17249–17336 (PQFT…CQVT), 17358–17447 (PTLQ…CNVA), 17457–17548 (PSFS…VMIA), 17570–17661 (PRFT…TQVI), 17676–17765 (PKFT…QATT), 17782–17873 (PRFV…LNVS), 18008–18097 (PKFM…SEID), 18121–18213 (PNFI…LQVS), 18224–18316 (PPLF…MQLD), 18329–18417 (PRVF…LELT), and 18429–18519 (PKFN…MILS). Intrachain disulfides connect cysteine 17379-cysteine 17431 and cysteine 17478-cysteine 17530. Residues cysteine 17697 and cysteine 17754 are joined by a disulfide bond. The cysteines at positions 18143 and 18195 are disulfide-linked.

It belongs to the protein kinase superfamily. CAMK Ser/Thr protein kinase family. In terms of assembly, interacts (via C-terminus) with myosin. Interacts with actin. It depends on Mg(2+) as a cofactor. As to expression, expression is restricted to body wall, enteric and vulval muscles.

It is found in the cytoplasm. The protein resides in the myofibril. It localises to the sarcomere. The protein localises to the a band. Its subcellular location is the i band. It is found in the nucleus membrane. It carries out the reaction L-seryl-[protein] + ATP = O-phospho-L-seryl-[protein] + ADP + H(+). The enzyme catalyses L-threonyl-[protein] + ATP = O-phospho-L-threonyl-[protein] + ADP + H(+). In terms of biological role, serine/threonine-protein kinase. Key component in the assembly and functioning of muscles. By providing connections at the level of individual microfilaments, it contributes to the fine balance of forces between the two halves of the sarcomere. The size and extensibility of the cross-links are the main determinants of sarcomere extensibility properties of muscle. In non-muscle cells, seems to play a role in chromosome condensation and chromosome segregation during mitosis. Might link the lamina network to chromatin or nuclear actin, or both during interphase. The protein is Titin homolog of Caenorhabditis elegans.